A 59-amino-acid chain; its full sequence is Large ribosomal subunit protein uL30 (59 aa).

It belongs to the universal ribosomal protein uL30 family. In terms of assembly, part of the 50S ribosomal subunit.

In Clostridium botulinum (strain 657 / Type Ba4), this protein is Large ribosomal subunit protein uL30.